The sequence spans 158 residues: 6,7-dimethyl-8-ribityllumazine synthase (158 aa).

5-amino-6-(D-ribitylamino)uracil is bound by residues phenylalanine 23, 61-63 (SFE), and 85-87 (AVI). 90–91 (ET) is a binding site for (2S)-2-hydroxy-3-oxobutyl phosphate. Residue histidine 93 is the Proton donor of the active site. Residue phenylalanine 118 coordinates 5-amino-6-(D-ribitylamino)uracil. Arginine 132 serves as a coordination point for (2S)-2-hydroxy-3-oxobutyl phosphate.

Belongs to the DMRL synthase family.

It catalyses the reaction (2S)-2-hydroxy-3-oxobutyl phosphate + 5-amino-6-(D-ribitylamino)uracil = 6,7-dimethyl-8-(1-D-ribityl)lumazine + phosphate + 2 H2O + H(+). Its pathway is cofactor biosynthesis; riboflavin biosynthesis; riboflavin from 2-hydroxy-3-oxobutyl phosphate and 5-amino-6-(D-ribitylamino)uracil: step 1/2. Functionally, catalyzes the formation of 6,7-dimethyl-8-ribityllumazine by condensation of 5-amino-6-(D-ribitylamino)uracil with 3,4-dihydroxy-2-butanone 4-phosphate. This is the penultimate step in the biosynthesis of riboflavin. The polypeptide is 6,7-dimethyl-8-ribityllumazine synthase (Prochlorococcus marinus (strain AS9601)).